The sequence spans 82 residues: Cytochrome b559 subunit alpha (82 aa).

A helical transmembrane segment spans residues 21-35; it reads VIHSVTIPSLFIAGW. H23 contributes to the heme binding site.

This sequence belongs to the PsbE/PsbF family. As to quaternary structure, heterodimer of an alpha subunit and a beta subunit. PSII is composed of 1 copy each of membrane proteins PsbA, PsbB, PsbC, PsbD, PsbE, PsbF, PsbH, PsbI, PsbJ, PsbK, PsbL, PsbM, PsbT, PsbX, PsbY, PsbZ, Psb30/Ycf12, at least 3 peripheral proteins of the oxygen-evolving complex and a large number of cofactors. It forms dimeric complexes. The cofactor is heme b.

The protein localises to the plastid. It is found in the chloroplast thylakoid membrane. Its function is as follows. This b-type cytochrome is tightly associated with the reaction center of photosystem II (PSII). PSII is a light-driven water:plastoquinone oxidoreductase that uses light energy to abstract electrons from H(2)O, generating O(2) and a proton gradient subsequently used for ATP formation. It consists of a core antenna complex that captures photons, and an electron transfer chain that converts photonic excitation into a charge separation. This chain is Cytochrome b559 subunit alpha, found in Ostreococcus tauri.